Reading from the N-terminus, the 260-residue chain is Small ribosomal subunit protein eS1 (260 aa).

Lysine 30 carries the N6-acetyllysine; alternate modification. Lysine 30 is covalently cross-linked (Glycyl lysine isopeptide (Lys-Gly) (interchain with G-Cter in SUMO2); alternate). Lysine 52 carries the N6-acetyllysine modification. At tyrosine 151 the chain carries ADP-ribosyltyrosine. A disordered region spans residues 228–260 (HGEGSSSGKATGDETGAKVERADGYEPPVQESV). Residues serine 232 and serine 233 each carry the phosphoserine modification. Positions 238-251 (TGDETGAKVERADG) are enriched in basic and acidic residues. At lysine 245 the chain carries N6-acetyllysine; alternate. A Glycyl lysine isopeptide (Lys-Gly) (interchain with G-Cter in SUMO2); alternate cross-link involves residue lysine 245. Tyrosine 252 is subject to Phosphotyrosine. Position 259 is a phosphoserine (serine 259).

The protein belongs to the eukaryotic ribosomal protein eS1 family. As to quaternary structure, component of the small ribosomal subunit. Mature ribosomes consist of a small (40S) and a large (60S) subunit. The 40S subunit contains about 33 different proteins and 1 molecule of RNA (18S). The 60S subunit contains about 49 different proteins and 3 molecules of RNA (28S, 5.8S and 5S). Identified in a IGF2BP1-dependent mRNP granule complex containing untranslated mRNAs. Binds with high affinity to IPO4. Interacts with DDIT3. Part of the small subunit (SSU) processome, composed of more than 70 proteins and the RNA chaperone small nucleolar RNA (snoRNA) U3. ADP-ribosylated at Tyr-151 by PARP1 in presence of HPF1.

It localises to the cytoplasm. The protein resides in the nucleus. The protein localises to the nucleolus. Component of the small ribosomal subunit. The ribosome is a large ribonucleoprotein complex responsible for the synthesis of proteins in the cell. Part of the small subunit (SSU) processome, first precursor of the small eukaryotic ribosomal subunit. During the assembly of the SSU processome in the nucleolus, many ribosome biogenesis factors, an RNA chaperone and ribosomal proteins associate with the nascent pre-rRNA and work in concert to generate RNA folding, modifications, rearrangements and cleavage as well as targeted degradation of pre-ribosomal RNA by the RNA exosome. May play a role during erythropoiesis through regulation of transcription factor DDIT3. The polypeptide is Small ribosomal subunit protein eS1 (Felis catus (Cat)).